The following is a 75-amino-acid chain: Translation initiation factor IF-1, chloroplastic (75 aa).

The region spanning 1 to 72 is the S1-like domain; it reads MKKQNLIHAE…TKGRIIYRLS (72 aa).

The protein belongs to the IF-1 family. In terms of assembly, component of the 30S ribosomal translation pre-initiation complex which assembles on the 30S ribosome in the order IF-2 and IF-3, IF-1 and N-formylmethionyl-tRNA(fMet); mRNA recruitment can occur at any time during PIC assembly.

Its subcellular location is the plastid. It is found in the chloroplast. One of the essential components for the initiation of protein synthesis. Stabilizes the binding of IF-2 and IF-3 on the 30S subunit to which N-formylmethionyl-tRNA(fMet) subsequently binds. Helps modulate mRNA selection, yielding the 30S pre-initiation complex (PIC). Upon addition of the 50S ribosomal subunit IF-1, IF-2 and IF-3 are released leaving the mature 70S translation initiation complex. The sequence is that of Translation initiation factor IF-1, chloroplastic from Pinus koraiensis (Korean pine).